We begin with the raw amino-acid sequence, 967 residues long: Translation initiation factor IF-2 (967 aa).

2 disordered regions span residues 201–320 and 349–382; these read KPIV…PGFV and LQGK…ELEA. Residues 233–248 show a composition bias toward polar residues; that stretch reads TGPTFSGQTIDLSQFN. Residues 256–272 show a composition bias toward low complexity; the sequence is PNKGGAKPAGAGNNNNN. The span at 354–363 shows a compositional bias: basic residues; the sequence is NKSKAAKYRR. Residues 364–382 are compositionally biased toward basic and acidic residues; the sequence is DKRDTHRQKSDDEQRELEA. Residues 465-635 enclose the tr-type G domain; it reads HRAPIVTVMG…LLEAEVLDLK (171 aa). Residues 474-481 form a G1 region; it reads GHVDHGKT. 474 to 481 contributes to the GTP binding site; that stretch reads GHVDHGKT. The G2 stretch occupies residues 499-503; sequence GITQH. The tract at residues 521–524 is G3; it reads DTPG. GTP contacts are provided by residues 521–525 and 575–578; these read DTPGH and NKVD. The segment at 575–578 is G4; it reads NKVD. The interval 611–613 is G5; that stretch reads SAK.

The protein belongs to the TRAFAC class translation factor GTPase superfamily. Classic translation factor GTPase family. IF-2 subfamily.

The protein resides in the cytoplasm. Functionally, one of the essential components for the initiation of protein synthesis. Protects formylmethionyl-tRNA from spontaneous hydrolysis and promotes its binding to the 30S ribosomal subunits. Also involved in the hydrolysis of GTP during the formation of the 70S ribosomal complex. This Flavobacterium psychrophilum (strain ATCC 49511 / DSM 21280 / CIP 103535 / JIP02/86) protein is Translation initiation factor IF-2.